The primary structure comprises 249 residues: Phosphatidylglycerol--prolipoprotein diacylglyceryl transferase (249 aa).

The next 7 helical transmembrane spans lie at 11–31 (LKIYGYGAMIALGILAAVILL), 49–69 (AIVGIIGGILGGKLLYIIVDI), 82–102 (LGNGFVIYGAIIGGAISVYLY), 116–136 (LVVPSVALAQGFGRIGCFLAG), 163–183 (LHPTQIYSSIFDFLLAFFLLW), 192–212 (GRVFSLYVIIYGVGRVIVEFL), and 223–243 (LSTSQFISLFTIIIGIFVFNI). An a 1,2-diacyl-sn-glycero-3-phospho-(1'-sn-glycerol)-binding site is contributed by R129.

The protein belongs to the Lgt family.

The protein resides in the cell membrane. The catalysed reaction is L-cysteinyl-[prolipoprotein] + a 1,2-diacyl-sn-glycero-3-phospho-(1'-sn-glycerol) = an S-1,2-diacyl-sn-glyceryl-L-cysteinyl-[prolipoprotein] + sn-glycerol 1-phosphate + H(+). The protein operates within protein modification; lipoprotein biosynthesis (diacylglyceryl transfer). In terms of biological role, catalyzes the transfer of the diacylglyceryl group from phosphatidylglycerol to the sulfhydryl group of the N-terminal cysteine of a prolipoprotein, the first step in the formation of mature lipoproteins. The protein is Phosphatidylglycerol--prolipoprotein diacylglyceryl transferase of Clostridium tetani (strain Massachusetts / E88).